The sequence spans 505 residues: Ribosomal RNA small subunit methyltransferase F (505 aa).

Residues 123 to 129, E147, D174, and D192 each bind S-adenosyl-L-methionine; that span reads ASAPGSK. The active-site Nucleophile is C245. Residues 409 to 437 form a disordered region; sequence GTNANNNSNTNPNNNANTNPNNNSNTNPR. Residues 410–435 show a composition bias toward low complexity; it reads TNANNNSNTNPNNNANTNPNNNSNTN.

It belongs to the class I-like SAM-binding methyltransferase superfamily. RsmB/NOP family.

The protein resides in the cytoplasm. The enzyme catalyses cytidine(1407) in 16S rRNA + S-adenosyl-L-methionine = 5-methylcytidine(1407) in 16S rRNA + S-adenosyl-L-homocysteine + H(+). Specifically methylates the cytosine at position 1407 (m5C1407) of 16S rRNA. This chain is Ribosomal RNA small subunit methyltransferase F, found in Shewanella denitrificans (strain OS217 / ATCC BAA-1090 / DSM 15013).